The following is a 965-amino-acid chain: SKI family transcriptional corepressor 1 (965 aa).

6 disordered regions span residues 45–72 (TQLG…SSAL), 278–367 (RTFS…GGGA), 410–458 (DDPV…GGGA), 530–592 (SGAP…GSYV), 615–777 (AYGA…FAPE), and 796–843 (VCTP…EDGL). 3 stretches are compositionally biased toward gly residues: residues 283–312 (QGGG…GPGC), 356–367 (GPAGPGGPGGGA), and 418–442 (EPKG…GGPG). Pro residues predominate over residues 571–586 (LPPPLAPLPPPPPPPA). Over residues 620–632 (PARGPGPGAGSGG) the composition is skewed to gly residues. The segment covering 641-650 (EGSSSYNSAS) has biased composition (polar residues). Acidic residues-rich tracts occupy residues 654-663 (DTADEPEVDV) and 670-679 (DDEDAQEETE). Residues 800–823 (EAHEPDKEDNHSPADDLETRKSYP) are compositionally biased toward basic and acidic residues. Residues 824–835 (DQRSISQPSPAN) are compositionally biased toward polar residues. Residues 858–922 (ENLAREELQK…DTLCNELDQE (65 aa)) adopt a coiled-coil conformation.

Belongs to the SKI family. In terms of assembly, interacts with LBX1. Interacts with SMAD1, SMAD2 and SMAD3. In terms of tissue distribution, present specifically in cerebellar Purkinje cells (at protein level).

Its subcellular location is the nucleus. In terms of biological role, acts as a transcriptional corepressor of LBX1. Inhibits BMP signaling. This is SKI family transcriptional corepressor 1 (SKOR1) from Homo sapiens (Human).